The following is a 323-amino-acid chain: tRNA dimethylallyltransferase (323 aa).

ATP is bound at residue 12-19 (GPTAAGKT). 14 to 19 (TAAGKT) serves as a coordination point for substrate. Interaction with substrate tRNA regions lie at residues 37–40 (DSAL) and 161–165 (QRLMR).

The protein belongs to the IPP transferase family. In terms of assembly, monomer. Mg(2+) serves as cofactor.

It carries out the reaction adenosine(37) in tRNA + dimethylallyl diphosphate = N(6)-dimethylallyladenosine(37) in tRNA + diphosphate. Functionally, catalyzes the transfer of a dimethylallyl group onto the adenine at position 37 in tRNAs that read codons beginning with uridine, leading to the formation of N6-(dimethylallyl)adenosine (i(6)A). The polypeptide is tRNA dimethylallyltransferase (Pseudomonas aeruginosa (strain UCBPP-PA14)).